The sequence spans 274 residues: Large ribosomal subunit protein bL28m (274 aa).

Residues 249–274 (SETEEFGLGQEEDLFMKEEPKPTKMA) form a disordered region. A compositionally biased stretch (basic and acidic residues) spans 262–274 (LFMKEEPKPTKMA).

It belongs to the bacterial ribosomal protein bL28 family. Component of the mitochondrial large ribosomal subunit (mt-LSU). Mature N.crassa 74S mitochondrial ribosomes consist of a small (37S) and a large (54S) subunit. The 37S small subunit contains a 16S ribosomal RNA (16S mt-rRNA) and 32 different proteins. The 54S large subunit contains a 23S rRNA (23S mt-rRNA) and 42 different proteins.

The protein localises to the mitochondrion. Component of the mitochondrial ribosome (mitoribosome), a dedicated translation machinery responsible for the synthesis of mitochondrial genome-encoded proteins, including at least some of the essential transmembrane subunits of the mitochondrial respiratory chain. The mitoribosomes are attached to the mitochondrial inner membrane and translation products are cotranslationally integrated into the membrane. The chain is Large ribosomal subunit protein bL28m (mrpl24) from Neurospora crassa (strain ATCC 24698 / 74-OR23-1A / CBS 708.71 / DSM 1257 / FGSC 987).